The primary structure comprises 93 residues: uncharacterized protein (93 aa).

It to E.coli YeaC.

This is an uncharacterized protein from Pseudoalteromonas haloplanktis (Alteromonas haloplanktis).